We begin with the raw amino-acid sequence, 240 residues long: Nudix hydrolase 3 (240 aa).

The Nudix hydrolase domain maps to 50–190 (NSAMSVLIPL…RMKYTLPSFD (141 aa)). The Nudix box motif lies at 89–110 (GRMDPGETTTETALRETFEEIG). Mg(2+)-binding residues include Glu-104 and Glu-108.

The protein belongs to the Nudix hydrolase family. PCD1 subfamily. The cofactor is Mn(2+). It depends on Mg(2+) as a cofactor.

Its function is as follows. Probably mediates the hydrolysis of some nucleoside diphosphate derivatives. This Caenorhabditis elegans protein is Nudix hydrolase 3 (ndx-3).